Reading from the N-terminus, the 289-residue chain is Probable endonuclease 4 (289 aa).

Zn(2+) is bound by residues histidine 75, histidine 115, glutamate 153, aspartate 187, histidine 190, histidine 224, aspartate 237, histidine 239, and glutamate 269.

The protein belongs to the AP endonuclease 2 family. The cofactor is Zn(2+).

It catalyses the reaction Endonucleolytic cleavage to 5'-phosphooligonucleotide end-products.. Functionally, endonuclease IV plays a role in DNA repair. It cleaves phosphodiester bonds at apurinic or apyrimidinic (AP) sites, generating a 3'-hydroxyl group and a 5'-terminal sugar phosphate. This is Probable endonuclease 4 from Chlamydia caviae (strain ATCC VR-813 / DSM 19441 / 03DC25 / GPIC) (Chlamydophila caviae).